A 366-amino-acid chain; its full sequence is MSADKSPYQIEPYKTVGAHRDLIHCVSFDPHGRRMATCASDMTMAIWDRQPDGNWRRSAHWKCHGGAVWRVIWAHPEFGQIVASCSYDRTIVIWEEQIVRTEKDLKCKESQWIRRTIISDNRSDVTDICFSPRHLGLSLASCNVLGAVRIYEAPDVVDASRWNLIHELQAFHTRCGCVTWSLSRMHRPLIAVGSDEKKAGGKERVVIYENIDGLRKWQRIHSLVFDMPCPITDLKFSPISMVDSHQLAIASGDVHVFNIKVPRTAILEEDGVDNPIHLADYSFQRVALLGDQRKAWRIRYNLIGSVITSTSLDGTLRSWKSLFVNQWVKLSEMNVDDYVPTADEVHKIVEAKTTERLPSQLDKVYF.

6 WD repeats span residues 18–57, 63–104, 111–152, 161–209, 226–267, and 290–329; these read AHRD…NWRR, CHGG…TEKD, QWIR…RIYE, RWNL…VIYE, DMPC…TAIL, and GDQR…QWVK.

This sequence belongs to the WD repeat SEC13 family. In terms of assembly, component of the nuclear pore complex (NPC). Probably part of the GATOR complex.

It localises to the nucleus. The protein resides in the nuclear pore complex. The protein localises to the lysosome membrane. Functionally, probable component of the nuclear pore complex (NPC) which is involved in the trafficking of macromolecules between the cytoplasm and nucleus. In terms of biological role, as a component of the GATOR complex may function in the amino acid-sensing branch of the TORC1 signaling pathway. The protein is Nucleoporin SEH1 of Caenorhabditis briggsae.